The following is a 205-amino-acid chain: Inactive ribonuclease-like protein 9 (205 aa).

The N-terminal stretch at 1–26 (MMRTLITTHPLPLLLLPQQLLQLVQF) is a signal peptide. 2 disulfides stabilise this stretch: Cys-116–Cys-168 and Cys-123–Cys-130. Asn-131 and Asn-143 each carry an N-linked (GlcNAc...) asparagine glycan.

The protein belongs to the pancreatic ribonuclease family. As to expression, at the mRNA level, widely expressed. At protein level, restricted to epididymis. Expressed in spermatozoa (sperm head and neck), with higher levels on ejaculated and epididymal sperm than on testicular sperm (at protein level). Expressed in the epithelial cells of the epididymal tubule (at protein level). Not detected in muscle.

The protein localises to the secreted. In terms of biological role, does not exhibit any ribonuclease activity. The protein is Inactive ribonuclease-like protein 9 (RNASE9) of Homo sapiens (Human).